Consider the following 503-residue polypeptide: 2-isopropylmalate synthase (503 aa).

In terms of domain architecture, Pyruvate carboxyltransferase spans 4–264 (LYIFDTTLRD…EVSIKTEEIY (261 aa)). Asp13, His201, His203, and Asn237 together coordinate Mn(2+). Residues 388–503 (KLRHLQVVSG…NQLVMLKGKD (116 aa)) are regulatory domain.

It belongs to the alpha-IPM synthase/homocitrate synthase family. LeuA type 1 subfamily. As to quaternary structure, homodimer. Mn(2+) is required as a cofactor.

The protein resides in the cytoplasm. It catalyses the reaction 3-methyl-2-oxobutanoate + acetyl-CoA + H2O = (2S)-2-isopropylmalate + CoA + H(+). It participates in amino-acid biosynthesis; L-leucine biosynthesis; L-leucine from 3-methyl-2-oxobutanoate: step 1/4. Its function is as follows. Catalyzes the condensation of the acetyl group of acetyl-CoA with 3-methyl-2-oxobutanoate (2-ketoisovalerate) to form 3-carboxy-3-hydroxy-4-methylpentanoate (2-isopropylmalate). This Dictyoglomus turgidum (strain DSM 6724 / Z-1310) protein is 2-isopropylmalate synthase.